The sequence spans 79 residues: Small integral membrane protein 40 (79 aa).

The chain crosses the membrane as a helical span at residues 35–55 (FFIFLALFLTLLMLEAAYKLL).

It is found in the membrane. The sequence is that of Small integral membrane protein 40 from Homo sapiens (Human).